The primary structure comprises 428 residues: Phosphoribosylamine--glycine ligase (428 aa).

The ATP-grasp domain maps to Lys109–Gln316. Val135 to Ser196 lines the ATP pocket. Mg(2+) contacts are provided by Glu286 and Asn288.

This sequence belongs to the GARS family. Mg(2+) serves as cofactor. Requires Mn(2+) as cofactor.

The enzyme catalyses 5-phospho-beta-D-ribosylamine + glycine + ATP = N(1)-(5-phospho-beta-D-ribosyl)glycinamide + ADP + phosphate + H(+). The protein operates within purine metabolism; IMP biosynthesis via de novo pathway; N(1)-(5-phospho-D-ribosyl)glycinamide from 5-phospho-alpha-D-ribose 1-diphosphate: step 2/2. The sequence is that of Phosphoribosylamine--glycine ligase from Yersinia pestis.